The chain runs to 70 residues: Large ribosomal subunit protein bL31 (70 aa).

Zn(2+) is bound by residues Cys-17, Cys-19, Cys-37, and Cys-40.

The protein belongs to the bacterial ribosomal protein bL31 family. Type A subfamily. Part of the 50S ribosomal subunit. Zn(2+) serves as cofactor.

Functionally, binds the 23S rRNA. This is Large ribosomal subunit protein bL31 from Clostridium acetobutylicum (strain ATCC 824 / DSM 792 / JCM 1419 / IAM 19013 / LMG 5710 / NBRC 13948 / NRRL B-527 / VKM B-1787 / 2291 / W).